A 506-amino-acid chain; its full sequence is Aldehyde dehydrogenase [NAD(P)+] 2 (506 aa).

Residue Glu268 is the Proton acceptor of the active site. The Nucleophile role is filled by Cys302.

Belongs to the aldehyde dehydrogenase family.

It is found in the cytoplasm. It catalyses the reaction an aldehyde + NAD(+) + H2O = a carboxylate + NADH + 2 H(+). The enzyme catalyses 3-aminopropanal + NAD(+) + H2O = beta-alanine + NADH + 2 H(+). Its function is as follows. Cytoplasmic aldehyde dehydrogenase involved in ethanol oxidation. Involved in pantothenic acid production through the conversion of 3-aminopropanal to beta-alanine, an intermediate in pantothenic acid (vitamin B5) and coenzyme A (CoA) biosynthesis. This Saccharomyces cerevisiae (strain ATCC 204508 / S288c) (Baker's yeast) protein is Aldehyde dehydrogenase [NAD(P)+] 2 (ALD3).